The primary structure comprises 131 residues: UPF0251 protein MMP0619 (131 aa).

The protein belongs to the UPF0251 family.

This is UPF0251 protein MMP0619 from Methanococcus maripaludis (strain DSM 14266 / JCM 13030 / NBRC 101832 / S2 / LL).